The primary structure comprises 3037 residues: Genome polyprotein (3037 aa).

At Ser-2 the chain carries N-acetylserine; by host. The segment at 2–23 (STNPKPQRKTKRNTNRRPQDVK) is interaction with STAT1. The interval 2–58 (STNPKPQRKTKRNTNRRPQDVKFPGGGQIVGGVYLLPRRGPRLGVRAARKTSERSQP) is interaction with EIF2AK2/PKR. The interaction with DDX3X stretch occupies residues 2–59 (STNPKPQRKTKRNTNRRPQDVKFPGGGQIVGGVYLLPRRGPRLGVRAARKTSERSQPR). The segment at 2–75 (STNPKPQRKT…PKDRRSTGKS (74 aa)) is disordered. Topologically, residues 2–168 (STNPKPQRKT…EDGINYATGN (167 aa)) are cytoplasmic. Short sequence motifs (nuclear localization signal) lie at residues 5-13 (PKPQRKTKR) and 38-43 (PRRGPR). Residues 7–16 (PQRKTKRNTN) are compositionally biased toward basic residues. Low complexity predominate over residues 32 to 47 (GGVYLLPRRGPRLGVR). Ser-53 is modified (phosphoserine; by host). 2 short sequence motifs (nuclear localization signal) span residues 58–64 (PRGRRQP) and 66–71 (PKDRRS). A phosphoserine; by host mark is found at Ser-99 and Ser-116. An important for endoplasmic reticulum and mitochondrial localization region spans residues 112 to 152 (PRHKSRNLGKVIDTLTCGFADLMGYIPVVGAPVGGVARALA). The tract at residues 122–173 (VIDTLTCGFADLMGYIPVVGAPVGGVARALAHGVRVLEDGINYATGNLPGCS) is interaction with APOA2. Residues 164 to 167 (YATG) are important for lipid droplets localization. The chain crosses the membrane as a helical span at residues 169-189 (LPGCSFSIFLLALLSCISVPV). A propeptide spans 178 to 191 (LLALLSCISVPVSA) (ER anchor for the core protein, removed in mature form by host signal peptidase). Residues 190–358 (SAVEVRNTSS…TGGHWGVMFG (169 aa)) are Lumenal-facing. 3 N-linked (GlcNAc...) asparagine; by host glycosylation sites follow: Asn-196, Asn-209, and Asn-234. The important for fusion stretch occupies residues 265–296 (IVMSATLCSALYVGDVCGALMIAAQVVVVSPQ). An N-linked (GlcNAc...) asparagine; by host glycan is attached at Asn-305. The helical transmembrane segment at 359–379 (LAYFSMQGAWAKVVVILLLTA) threads the bilayer. Residues 380 to 729 (GVEASTYTTG…WEWVVLLFLL (350 aa)) lie on the Lumenal side of the membrane. An HVR1 region spans residues 385 to 412 (TYTTGAVVGRSTHLFTSMFSLGSQQRVQ). 3 N-linked (GlcNAc...) (high mannose) asparagine; by host glycosylation sites follow: Asn-417, Asn-423, and Asn-430. 4 cysteine pairs are disulfide-bonded: Cys-429-Cys-554, Cys-452-Cys-459, Cys-488-Cys-496, and Cys-505-Cys-510. Asn-448 carries an N-linked (GlcNAc...) asparagine; by host glycan. The tract at residues 475–480 (EESVTN) is HVR2. A CD81-binding 1 region spans residues 482–495 (ADMRPYCWHYPPRP). N-linked (GlcNAc...) asparagine; by host glycosylation occurs at Asn-534. Positions 546–553 (PPKGAWFG) are CD81-binding 2. The N-linked (GlcNAc...) asparagine; by host glycan is linked to Asn-558. 4 cysteine pairs are disulfide-bonded: Cys-566–Cys-571, Cys-585–Cys-589, Cys-601–Cys-624, and Cys-611–Cys-648. 2 N-linked (GlcNAc...) (high mannose) asparagine; by host glycosylation sites follow: Asn-627 and Asn-649. Cysteines 656 and 681 form a disulfide. Positions 664–675 (SQLSPLLHSTTE) are PKR/eIF2-alpha phosphorylation homology domain (PePHD). The chain crosses the membrane as a helical span at residues 730-750 (LADARVCACLWMLLLLGQAEA). Over 751 to 761 (ALEKLVILHAA) the chain is Lumenal. A helical membrane pass occupies residues 762–782 (SAASSNGLLYFILFFVAAWCI). At 783–786 (KGRA) the chain is on the cytoplasmic side. The chain crosses the membrane as a helical span at residues 787–807 (VPMVTYTLLGCWSFVLLLMAL). Over 808–817 (PHQAYALDAA) the chain is Lumenal. Residues 818–838 (EQGQIGMALLIAITAFTITPA) form a helical membrane-spanning segment. Over 839–885 (YKILLSRCLWWTCYMLVLAEALIQDWIPPLQARGGRDGVIWAMTMFY) the chain is Cytoplasmic. A helical membrane pass occupies residues 886–906 (PGVVFDITKWLLAILGPGYLF). The 126-residue stretch at 905 to 1030 (LFRAAVMRTP…GYTSKGWRLL (126 aa)) folds into the Peptidase C18 domain. The Lumenal segment spans residues 907-932 (RAAVMRTPYFVRANALLRMCALVKQL). The segment at 908-1210 (AAVMRTPYFV…PVESLDVVTR (303 aa)) is protease NS2-3. Cys-926 carries S-palmitoyl cysteine; by host lipidation. A helical membrane pass occupies residues 933–953 (AGGKYVQVALITLGKWTGTYI). Residues 933-953 (AGGKYVQVALITLGKWTGTYI) are interaction with host SCPS1. The Cytoplasmic segment spans residues 954-1661 (YDHLSPMSDW…CMQADLEIMT (708 aa)). Active-site for protease NS2 activity; shared with dimeric partner residues include His-956, Glu-976, and Cys-997. The Peptidase S29 domain occupies 1031–1212 (APITAYAQQT…ESLDVVTRSP (182 aa)). Catalysis depends on charge relay system; for serine protease NS3 activity residues His-1087 and Asp-1111. Zn(2+) is bound by residues Cys-1127 and Cys-1129. Catalysis depends on Ser-1169, which acts as the Charge relay system; for serine protease NS3 activity. Cys-1175 and His-1179 together coordinate Zn(2+). Positions 1221–1373 (PAVPQTYQVG…PNIEEVALGH (153 aa)) constitute a Helicase ATP-binding domain. 1234 to 1241 (APTGSGKS) is a binding site for ATP. Mg(2+) contacts are provided by Ser-1241 and Glu-1321. The DECH box signature appears at 1320–1323 (DECH). An RNA-binding region spans residues 1490-1502 (QRRGRTGRGRLGI). Residues 1662–1682 (STWVLAGGVLAAVAAYCLATG) traverse the membrane as a helical segment. The NS3-binding stretch occupies residues 1683-1694 (CVSIIGRIHVNQ). The Cytoplasmic segment spans residues 1683–1809 (CVSIIGRIHV…ALTSPLSTST (127 aa)). A helical membrane pass occupies residues 1810-1830 (TILLNIMGGWLASQIAPPAGA). Residues 1831 to 1832 (TG) lie on the Lumenal side of the membrane. The helical transmembrane segment at 1833–1853 (FVVSGLVGAAVGSIGLGKILV) threads the bilayer. Residue Asp-1854 is a topological domain, cytoplasmic. Residues 1855–1875 (VLAGYGAGISGALVAFKIMSG) traverse the membrane as a helical segment. The Lumenal segment spans residues 1876–1885 (EKPSVEDVVN). Residues 1886–1906 (LLPAILSPGALVVGVICAAIL) form a helical membrane-spanning segment. Over 1907 to 1976 (RRHVGQGEGA…WITEDCPVPC (70 aa)) the chain is Cytoplasmic. A lipid anchor (S-palmitoyl cysteine; by host) is attached at Cys-1976. The stretch at 1977–2006 (SGSWLRDVWDWVCSILIDFKNWLSAKLFPR) is an intramembrane region. At 2007 to 3016 (LPGIPFISCQ…YHSVSRARPR (1010 aa)) the chain is on the cytoplasmic side. Positions 2015, 2033, 2035, and 2056 each coordinate Zn(2+). The segment at 2124 to 2212 (EFFSWVDGVQ…ASSSASQLSA (89 aa)) is FKBP8-binding. The tract at residues 2124–2336 (EFFSWVDGVQ…PVPPPRRRRA (213 aa)) is transcriptional activation. Positions 2139 to 2143 (PTPKA) are interaction with non-structural protein 4A. The segment at 2193-2464 (RLARGSPPSA…ALITPCSPEE (272 aa)) is interaction with host SKP2. A phosphoserine; by host mark is found at Ser-2198, Ser-2201, Ser-2205, Ser-2208, Ser-2211, and Ser-2214. The interval 2214-2253 (SLRATCTTHAKCPDIDMVDANLFCWCTMGGNMTRIESESK) is ISDR. Residues 2214–2279 (SLRATCTTHA…REPSIPSEYL (66 aa)) are interaction with EIF2AK2/PKR. Positions 2253–2310 (KVLMVDSFDPVVDKEDEREPSIPSEYLLPKSRFPPALPPWARPDYNPPLLETWKRPDY) are NS4B-binding. The segment at 2303 to 2381 (ETWKRPDYQP…GTTGETSKSP (79 aa)) is V3. Positions 2326–2329 (TPVP) match the SH3-binding motif. Residues 2331-2339 (PRRRRAVVL) carry the Nuclear localization signal motif. Residue Lys-2354 forms a Glycyl lysine isopeptide (Lys-Gly) (interchain with G-Cter in ubiquitin) linkage. The disordered stretch occupies residues 2354–2434 (KSFGCPPPSG…APGSDSGSWS (81 aa)). A compositionally biased stretch (acidic residues) spans 2402-2411 (EPGDPDLEPE). Residues Ser-2475 and Ser-2488 each carry the phosphoserine; by host modification. Residues 2660 to 2778 (PMGFSYDTRC…ISESQGVEED (119 aa)) form the RdRp catalytic domain. Asp-2666, Asp-2764, and Asp-2765 together coordinate Mg(2+). A helical membrane pass occupies residues 3017 to 3037 (LLLLGLLLLCVGVGIFLLPAR).

This sequence belongs to the hepacivirus polyprotein family. In terms of assembly, homooligomer. Interacts with E1 (via C-terminus). Interacts with the non-structural protein 5A. Interacts (via N-terminus) with host STAT1 (via SH2 domain); this interaction results in decreased STAT1 phosphorylation and ubiquitin-mediated proteasome-dependent STAT1 degradation, leading to decreased IFN-stimulated gene transcription. Interacts with host STAT3; this interaction constitutively activates STAT3. Interacts with host LTBR receptor. Interacts with host TNFRSF1A receptor and possibly induces apoptosis. Interacts with host HNRPK. Interacts with host YWHAE. Interacts with host UBE3A/E6AP. Interacts with host DDX3X. Interacts with host APOA2. Interacts with host RXRA protein. Interacts with host SP110 isoform 3/Sp110b; this interaction sequesters the transcriptional corepressor SP110 away from the nucleus. Interacts with host CREB3 nuclear transcription protein; this interaction triggers cell transformation. Interacts with host ACY3. Interacts with host C1QR1. Interacts with host RBM24; this interaction, which enhances the interaction of the mature core protein with 5'-UTR, may inhibit viral translation and favor replication. Interacts with host EIF2AK2/PKR; this interaction induces the autophosphorylation of EIF2AK2. Part of the viral assembly initiation complex composed of NS2, E1, E2, NS3, NS4A, NS5A and the mature core protein. Forms a heterodimer with envelope glycoprotein E2. Interacts with mature core protein. Interacts with protease NS2. The heterodimer E1/E2 interacts with host CLDN1; this interaction plays a role in viral entry into host cell. Interacts with host SPSB2 (via C-terminus). Part of the viral assembly initiation complex composed of NS2, E1, E2, NS3, NS4A, NS5A and the mature core protein. Interacts with host NEURL3; this interaction prevents E1 binding to glycoprotein E2. As to quaternary structure, forms a heterodimer with envelope glycoprotein E1. Interacts with host CD81 and SCARB1 receptors; these interactions play a role in viral entry into host cell. Interacts with host EIF2AK2/PKR; this interaction inhibits EIF2AK2 and probably allows the virus to evade the innate immune response. Interacts with host CD209/DC-SIGN and CLEC4M/DC-SIGNR. Interact with host SPCS1; this interaction is essential for viral particle assembly. Interacts with protease NS2. The heterodimer E1/E2 interacts with host CLDN1; this interaction plays a role in viral entry into host cell. Part of the viral assembly initiation complex composed of NS2, E1, E2, NS3, NS4A, NS5A and the mature core protein. Interacts with host SLC3A2/4F2hc; the interaction may facilitate viral entry into host cell. Interacts with human PLSCR1. In terms of assembly, homohexamer. Homoheptamer. Interacts with protease NS2. Homodimer. Interacts with host SPCS1; this interaction is essential for viral particle assembly. Interacts with envelope glycoprotein E1. Interacts with envelope glycoprotein E2. Interacts with viroporin p7. Interacts with serine protease/helicase NS3. Part of the replication complex composed of NS2, NS3, NS4A, NS4B, NS5A and the RNA-directed RNA polymerase embedded in an ER-derived membranous web. Part of the viral assembly initiation complex composed of NS2, E1, E2, NS3, NS4A, NS5A and the mature core protein. As to quaternary structure, interacts with protease NS2. Interacts with non-structural protein 4A; this interaction stabilizes the folding of NS3 serine protease. NS3-NS4A interaction is essential for NS3 activation and allows membrane anchorage of the latter. NS3/NS4A complex also prevents phosphorylation of host IRF3, thus preventing the establishment of dsRNA induced antiviral state. Interacts with host MAVS; this interaction leads to the cleavage and inhibition of host MAVS. Interacts with host TICAM1; this interaction leads to the cleavage and inhibition of host TICAM1. Interacts with host TANK-binding kinase/TBK1; this interaction results in the inhibition of the association between TBK1 and IRF3, which leads to the inhibition of IRF3 activation. Interacts with host RBM24. Part of the replication complex composed of NS2, NS3, NS4A, NS4B, NS5A and the RNA-directed RNA polymerase embedded in an ER-derived membranous web. Part of the viral assembly initiation complex composed of NS2, E1, E2, NS3, NS4A, NS5A and the mature core protein. In terms of assembly, interacts with NS3 serine protease; this interaction stabilizes the folding of NS3 serine protease. NS3-NS4A interaction is essential for NS3 activation and allows membrane anchorage of the latter. Interacts with non-structural protein 5A (via N-terminus). Part of the replication complex composed of NS2, NS3, NS4A, NS4B, NS5A and the RNA-directed RNA polymerase embedded in an ER-derived membranous web. Part of the viral assembly initiation complex composed of NS2, E1, E2, NS3, NS4A, NS5A and the mature core protein. Homomultimer. Interacts with non-structural protein NS5A. Interacts with host PLA2G4C; this interaction likely initiates the recruitment of replication complexes to lipid droplets. Interacts with host STING; this interaction disrupts the interaction between STING and TBK1 thereby suppressing the interferon signaling. Part of the replication complex composed of NS2, NS3, NS4A, NS4B, NS5A and the RNA-directed RNA polymerase embedded in an ER-derived membranous web. As to quaternary structure, monomer. Homodimer; dimerization is required for RNA-binding. Interacts with the mature core protein. Interacts (via N-terminus) with non-structural protein 4A. Interacts with non-structural protein 4B. Interacts (via region D2) with RNA-directed RNA polymerase. Part of the viral assembly initiation complex composed of NS2, E1, E2, NS3, NS4A, NS5A and the mature core protein. Part of the replication complex composed of NS2, NS3, NS4A, NS4B, NS5A and the RNA-directed RNA polymerase embedded in an ER-derived membranous web. Interacts with host GRB2. Interacts with host BIN1. Interacts with host PIK3R1. Interacts with host SRCAP. Interacts with host FKBP8. Interacts (via C-terminus) with host VAPB (via MSP domain). Interacts with host EIF2AK2/PKR; this interaction leads to disruption of EIF2AK2 dimerization by NS5A and probably allows the virus to evade the innate immune response. Interacts (via N-terminus) with host PACSIN2 (via N-terminus); this interaction attenuates protein kinase C alpha-mediated phosphorylation of PACSIN2 by disrupting the interaction between PACSIN2 and PRKCA. Interacts (via N-terminus) with host SRC kinase (via SH2 domain). Interacts with most Src-family kinases. Interacts with host IFI27 and SKP2; promotes the ubiquitin-mediated proteasomal degradation of NS5A. Interacts with host GPS2. Interacts with host TNFRSF21; this interaction allows the modulation by the virus of JNK, p38 MAPK, STAT3, and Akt signaling pathways in a DR6-dependent manner. Interacts (via N-terminus) with host CIDEB (via N-terminus); this interaction seems to regulate the association of HCV particles with APOE. Interacts with host CHKA/Choline Kinase-alpha; CHKA bridges host PI4KA and NS5A and potentiates NS5A-stimulated PI4KA activity, which then facilitates the targeting of the ternary complex to the ER for viral replication. Interacts with host SPSB2 (via C-terminus); this interaction targets NS5A for ubiquitination and degradation. Interacts with host RAB18; this interaction may promote the association of NS5A and other replicase components with lipid droplets. Interacts (via region D2) with host PPIA/CYPA; the interaction stimulates RNA-binding ability of NS5A and is dependent on the peptidyl-prolyl cis-trans isomerase activity of PPIA/CYPA. Interacts with host TRIM14; this interaction induces the degradation of NS5A. In terms of assembly, homooligomer. Interacts with non-structural protein 5A. Interacts with host VAPB. Interacts with host PRK2/PKN2. Interacts with host HNRNPA1 and SEPT6; these interactions facilitate viral replication. Part of the replication complex composed of NS2, NS3, NS4A, NS4B, NS5A and the RNA-directed RNA polymerase. It depends on Zn(2+) as a cofactor. Requires Mg(2+) as cofactor. Specific enzymatic cleavages in vivo yield mature proteins. The structural proteins, core, E1, E2 and p7 are produced by proteolytic processing by host signal peptidases. The core protein precursor is synthesized as a 23 kDa, which is retained in the ER membrane through the hydrophobic signal peptide. Cleavage by the signal peptidase releases the 21 kDa mature core protein. The cleavage of the core protein precursor occurs between aminoacids 176 and 188 but the exact cleavage site is not known. Some degraded forms of the core protein appear as well during the course of infection. The other proteins (p7, NS2, NS3, NS4A, NS4B, NS5A and NS5B) are cleaved by the viral proteases. Autoprocessing between NS2 and NS3 is mediated by the NS2 cysteine protease catalytic domain and regulated by the NS3 N-terminal domain. Post-translationally, phosphorylated by host PKC and PKA. In terms of processing, ubiquitinated; mediated by UBE3A and leading to core protein subsequent proteasomal degradation. Highly N-glycosylated. Post-translationally, palmitoylation is required for NS2/3 autoprocessing and E2 recruitment to membranes. In terms of processing, palmitoylated. This modification may play a role in its polymerization or in protein-protein interactions. Phosphorylated on serines in a basal form termed p56. p58 is a hyperphosphorylated form of p56. p56 and p58 coexist in the cell in roughly equivalent amounts. Hyperphosphorylation is dependent on the presence of NS4A. Host CSNK1A1/CKI-alpha or RPS6KB1 kinases may be responsible for NS5A phosphorylation. Post-translationally, tyrosine phosphorylation is essential for the interaction with host SRC. In terms of processing, the N-terminus is phosphorylated by host PRK2/PKN2.

The protein localises to the host endoplasmic reticulum membrane. Its subcellular location is the host mitochondrion membrane. It localises to the virion. It is found in the host cytoplasm. The protein resides in the host nucleus. The protein localises to the host lipid droplet. Its subcellular location is the virion membrane. It localises to the host mitochondrion. It is found in the host cell membrane. The protein resides in the host perinuclear region. It carries out the reaction Hydrolysis of four peptide bonds in the viral precursor polyprotein, commonly with Asp or Glu in the P6 position, Cys or Thr in P1 and Ser or Ala in P1'.. The enzyme catalyses a ribonucleoside 5'-triphosphate + H2O = a ribonucleoside 5'-diphosphate + phosphate + H(+). The catalysed reaction is ATP + H2O = ADP + phosphate + H(+). It catalyses the reaction RNA(n) + a ribonucleoside 5'-triphosphate = RNA(n+1) + diphosphate. Its activity is regulated as follows. Inhibited by the antiviral drug hexamethylene amiloride. Inhibition by amantadine appears to be genotype-dependent. Also inhibited by long-alkyl-chain iminosugar derivatives. Activity is up-regulated by PRK2/PKN2-mediated phosphorylation. Packages viral RNA to form a viral nucleocapsid, and promotes virion budding. Participates in the viral particle production as a result of its interaction with the non-structural protein 5A. Binds RNA and may function as a RNA chaperone to induce the RNA structural rearrangements taking place during virus replication. Modulates viral translation initiation by interacting with viral IRES and 40S ribosomal subunit. Affects various cell signaling pathways, host immunity and lipid metabolism. Prevents the establishment of cellular antiviral state by blocking the interferon-alpha/beta (IFN-alpha/beta) and IFN-gamma signaling pathways and by blocking the formation of phosphorylated STAT1 and promoting ubiquitin-mediated proteasome-dependent degradation of STAT1. Activates STAT3 leading to cellular transformation. Regulates the activity of cellular genes, including c-myc and c-fos. May repress the promoter of p53, and sequester CREB3 and SP110 isoform 3/Sp110b in the cytoplasm. Represses cell cycle negative regulating factor CDKN1A, thereby interrupting an important check point of normal cell cycle regulation. Targets transcription factors involved in the regulation of inflammatory responses and in the immune response: suppresses TNF-induced NF-kappa-B activation, and activates AP-1. Binds to dendritic cells (DCs) via C1QR1, resulting in down-regulation of T-lymphocytes proliferation. Alters lipid metabolism by interacting with hepatocellular proteins involved in lipid accumulation and storage. Induces up-regulation of FAS promoter activity, and thereby contributes to the increased triglyceride accumulation in hepatocytes (steatosis). Its function is as follows. Forms a heterodimer with envelope glycoprotein E2, which mediates virus attachment to the host cell, virion internalization through clathrin-dependent endocytosis and fusion with host membrane. Fusion with the host cell is most likely mediated by both E1 and E2, through conformational rearrangements of the heterodimer required for fusion rather than a classical class II fusion mechanism. E1/E2 heterodimer binds host apolipoproteins such as APOB and ApoE thereby forming a lipo-viro-particle (LVP). APOE associated to the LVP allows the initial virus attachment to cell surface receptors such as the heparan sulfate proteoglycans (HSPGs), syndecan-1 (SDC1), syndecan-1 (SDC2), the low-density lipoprotein receptor (LDLR) and scavenger receptor class B type I (SCARB1). The cholesterol transfer activity of SCARB1 allows E2 exposure and binding of E2 to SCARB1 and the tetraspanin CD81. E1/E2 heterodimer binding on CD81 activates the epithelial growth factor receptor (EGFR) signaling pathway. Diffusion of the complex E1-E2-EGFR-SCARB1-CD81 to the cell lateral membrane allows further interaction with Claudin 1 (CLDN1) and occludin (OCLN) to finally trigger HCV entry. In terms of biological role, forms a heterodimer with envelope glycoprotein E1, which mediates virus attachment to the host cell, virion internalization through clathrin-dependent endocytosis and fusion with host membrane. Fusion with the host cell is most likely mediated by both E1 and E2, through conformational rearrangements of the heterodimer required for fusion rather than a classical class II fusion mechanism. The interaction between envelope glycoprotein E2 and host apolipoprotein E/APOE allows the proper assembly, maturation and infectivity of the viral particles. This interaction is probably promoted via the up-regulation of cellular autophagy by the virus. E1/E2 heterodimer binds host apolipoproteins such as APOB and APOE thereby forming a lipo-viro-particle (LVP). APOE associated to the LVP allows the initial virus attachment to cell surface receptors such as the heparan sulfate proteoglycans (HSPGs), syndecan-1 (SDC1), syndecan-1 (SDC2), the low-density lipoprotein receptor (LDLR) and scavenger receptor class B type I (SCARB1). The cholesterol transfer activity of SCARB1 allows E2 exposure and binding of E2 to SCARB1 and the tetraspanin CD81. E1/E2 heterodimer binding on CD81 activates the epithelial growth factor receptor (EGFR) signaling pathway. Diffusion of the complex E1-E2-EGFR-SCARB1-CD81 to the cell lateral membrane allows further interaction with Claudin 1 (CLDN1) and occludin (OCLN) to finally trigger HCV entry. Inhibits host EIF2AK2/PKR activation, preventing the establishment of an antiviral state. Viral ligand for CD209/DC-SIGN and CLEC4M/DC-SIGNR, which are respectively found on dendritic cells (DCs), and on liver sinusoidal endothelial cells and macrophage-like cells of lymph node sinuses. These interactions allow the capture of circulating HCV particles by these cells and subsequent facilitated transmission to permissive cells such as hepatocytes and lymphocyte subpopulations. The interaction between E2 and host amino acid transporter complex formed by SLC3A2 and SLC7A5/LAT1 may facilitate viral entry into host cell. Functionally, ion channel protein that acts as a viroporin and plays an essential role in the assembly, envelopment and secretion of viral particles. Regulates the host cell secretory pathway, which induces the intracellular retention of viral glycoproteins and favors assembly of viral particles. Creates a pore in acidic organelles and releases Ca(2+) and H(+) in the cytoplasm of infected cells, leading to a productive viral infection. High levels of cytoplasmic Ca(2+) may trigger membrane trafficking and transport of viral ER-associated proteins to viroplasms, sites of viral genome replication. This ionic imbalance induces the assembly of the inflammasome complex, which triggers the maturation of pro-IL-1beta into IL-1beta through the action of caspase-1. Targets also host mitochondria and induces mitochondrial depolarization. In addition of its role as a viroporin, acts as a lipid raft adhesion factor. Cysteine protease required for the proteolytic auto-cleavage between the non-structural proteins NS2 and NS3. The N-terminus of NS3 is required for the function of NS2 protease (active region NS2-3). Promotes the initiation of viral particle assembly by mediating the interaction between structural and non-structural proteins. Its function is as follows. Displays three enzymatic activities: serine protease with a chymotrypsin-like fold, NTPase and RNA helicase. NS3 serine protease, in association with NS4A, is responsible for the cleavages of NS3-NS4A, NS4A-NS4B, NS4B-NS5A and NS5A-NS5B. The NS3/NS4A complex prevents phosphorylation of host IRF3, thus preventing the establishment of dsRNA induced antiviral state. The NS3/NS4A complex induces host amino acid transporter component SLC3A2, thus contributing to HCV propagation. NS3 RNA helicase binds to RNA and unwinds both dsDNA and dsRNA in the 3' to 5' direction, and likely resolves RNA complicated stable secondary structures in the template strand. Binds a single ATP and catalyzes the unzipping of a single base pair of dsRNA. Inhibits host antiviral proteins TBK1 and IRF3 thereby preventing the establishment of an antiviral state. Cleaves host MAVS/CARDIF thereby preventing the establishment of an antiviral state. Cleaves host TICAM1/TRIF, thereby disrupting TLR3 signaling and preventing the establishment of an antiviral state. In terms of biological role, induces a specific membrane alteration that serves as a scaffold for the virus replication complex. This membrane alteration gives rise to the so-called ER-derived membranous web that contains the replication complex. NS4B self-interaction contributes to its function in membranous web formation. Promotes host TRIF protein degradation in a CASP8-dependent manner thereby inhibiting host TLR3-mediated interferon signaling. Disrupts the interaction between STING and TBK1 contributing to the inhibition of interferon signaling. Functionally, phosphorylated protein that is indispensable for viral replication and assembly. Both hypo- and hyperphosphorylated states are required for the viral life cycle. The hyperphosphorylated form of NS5A is an inhibitor of viral replication. Involved in RNA-binding and especially in binding to the viral genome. Zinc is essential for RNA-binding. Participates in the viral particle production as a result of its interaction with the mature viral core protein. Its interaction with host VAPB may target the viral replication complex to vesicles. Down-regulates viral IRES translation initiation. Mediates interferon resistance, presumably by interacting with and inhibiting host EIF2AK2/PKR. Prevents BIN1-induced apoptosis. Acts as a transcriptional activator of some host genes important for viral replication when localized in the nucleus. Via the interaction with host PACSIN2, modulates lipid droplet formation in order to promote virion assembly. Modulates TNFRSF21/DR6 signaling pathway for viral propagation. RNA-dependent RNA polymerase that performs primer-template recognition and RNA synthesis during viral replication. Initiates RNA transcription/replication at a flavin adenine dinucleotide (FAD), resulting in a 5'- FAD cap on viral RNAs. In this way, recognition of viral 5' RNA by host pattern recognition receptors can be bypassed, thereby evading activation of antiviral pathways. The protein is Genome polyprotein of Hepatitis C virus genotype 2c (isolate BEBE1) (HCV).